Consider the following 308-residue polypeptide: Ribosomal RNA large subunit methyltransferase F (308 aa).

The segment at 190 to 212 (DSAASARAGSERKRRNLGQDKND) is disordered.

Belongs to the methyltransferase superfamily. METTL16/RlmF family.

It is found in the cytoplasm. The catalysed reaction is adenosine(1618) in 23S rRNA + S-adenosyl-L-methionine = N(6)-methyladenosine(1618) in 23S rRNA + S-adenosyl-L-homocysteine + H(+). Its function is as follows. Specifically methylates the adenine in position 1618 of 23S rRNA. The polypeptide is Ribosomal RNA large subunit methyltransferase F (Citrobacter koseri (strain ATCC BAA-895 / CDC 4225-83 / SGSC4696)).